Reading from the N-terminus, the 277-residue chain is MSKFRLAVVQLHVSKIKADNLGRAQTLVKEAAGQGAKVVVLPECFNSPYGTGFFKEYAEKIPGESTQVLSETAKKCGIYLVGGSIPEEDGGKLYNTCSVFGPDGTLLVTHRKIHLFDIDVPGKIRFQESETLSPGKSLSMFETPYCKVGVGICYDIRFAELAQIYAKKGCQLLVYPGAFNMTTGPAHWELLQRGRAVDNQVYVATASPARDETASYVAWGHSSVINPWGEVISKAGSEESVVYADIDLQYLADVRQQIPITKQRRNDLYSVNSVQEG.

In terms of domain architecture, CN hydrolase spans 4–248 (FRLAVVQLHV…ESVVYADIDL (245 aa)). Catalysis depends on Glu-43, which acts as the Proton acceptor. The Proton donor role is filled by Lys-112. Cys-153 functions as the Nucleophile in the catalytic mechanism.

It belongs to the carbon-nitrogen hydrolase superfamily. NIT1/NIT2 family. In terms of assembly, homodimer.

The protein localises to the cytoplasm. It carries out the reaction 2-oxoglutaramate + H2O = 2-oxoglutarate + NH4(+). The enzyme catalyses 2-oxosuccinamate + H2O = oxaloacetate + NH4(+). Its function is as follows. Has omega-amidase activity. The role of omega-amidase is to remove potentially toxic intermediates by converting 2-oxoglutaramate and 2-oxosuccinamate to biologically useful 2-oxoglutarate and oxaloacetate, respectively. The protein is Omega-amidase NIT2 (nit2) of Danio rerio (Zebrafish).